We begin with the raw amino-acid sequence, 57 residues long: Small ribosomal subunit protein eS27 (57 aa).

4 residues coordinate Zn(2+): cysteine 10, cysteine 13, cysteine 29, and cysteine 32. Residues 10–32 (CGDCENEQVVFGKASSVVSCAVC) form a C4-type zinc finger.

This sequence belongs to the eukaryotic ribosomal protein eS27 family. Part of the 30S ribosomal subunit. Zn(2+) serves as cofactor.

This Halorubrum lacusprofundi (strain ATCC 49239 / DSM 5036 / JCM 8891 / ACAM 34) protein is Small ribosomal subunit protein eS27.